The following is a 578-amino-acid chain: MKFSNITIKNFRNFEKVNINLDNKNVIFGMNDIGKTNFLYALRFLLDKEIRKFGFNKSDYHKHDTSKKIEIILTLDLSNYEKDEDTKKLISVVKGARTSANADVFYIALESKYDDKELYGNIILKWGSELDNLIDIPGRGNINALDNVFKVIYINPLVDLDKLFAQNKKYIFEESQGNESDEGILNNIKSLTDQVNQQIGEMTIIKGFQQEITSEYRSLKKEEVSIELKSEMAIKGFFSDIIPYIKKDGDSNYYPTSGDGRRKMLSYSIYNYLAKKKYEDKIVIYLIEEPEISLHRSMQIALSKQLFEQSTYKYFFLSTHSPELLYEMDNTRLIRVHSTEKVVCSSHMYNVEEAYGSVKKKLNKALSSALFAERVLLIEGPSEKILFEKVLDEVEPEYELNGGFLLEVGGTYFNHYVCTLNDLGITHIIKTDNDLKSKKGKKGVYELLGLNRCLNLLGRENLDEITIDIPEDIKGKKKKERLNERKKEIFKQYKNEVGEFLGERIYLSEIDLENDLYSAIGESMKRIFENEDPVHYLQKSKLFNMVELVNNLSTKDCFDVFEHEKFACLKELVGSDRG.

Positions 1–341 are ATPase domain; sequence MKFSNITIKN…RLIRVHSTEK (341 aa). 32–36 contributes to the ATP binding site; the sequence is DIGKT. A toprim domain region spans residues 370 to 510; the sequence is LFAERVLLIE…LGERIYLSEI (141 aa). Glutamate 379, glutamate 383, aspartate 463, glutamate 464, and glutamate 513 together coordinate a divalent metal cation.

In terms of assembly, homotetramer. Forms the core of the anti-phage defense complex. Interacts with GajB; 2 GajB dimers dock at opposite sides of the GajA complex to form a 4:4 GajA-GajB assembly (GajAB). GajAB interacts with Bacillus phage Phi3T Gad1 protein; this interaction forms a 4:4:8 GajAB-Gad1 complex and leads to GajAB inhibition. Requires Mg(2+) as cofactor. It depends on Mn(2+) as a cofactor.

With respect to regulation, endonuclease activity inhibited by all NTPs, dNTPs, NDPs (at 0.5 mM, UDP not tested) and AMP-PNP; not inhibited by any tested NMP, dNMP or nucleoside. Inhibited by 100 mM NaCl, 100 mM KCl, 0.5 mM Co(2+) and 0.5 mM Ni(2+). In terms of biological role, component of antiviral defense system Gabija type I, composed of GajA and GajB. Endonuclease that nicks double-stranded DNA within the sequence 5'-TNNNCGGGNNA-3' in the absence of nucleotides (NTP, dNTP and NDPs), cleaving after C-1. Has no detected ATPase activity. Expression of Gabija type I in B.subtilis (strain BEST7003) confers resistance to phages phi105, phi29, rho14, SpBeta and SBSphiC. Expression of Gabija type I in E.coli B (strain ATCC 11303) confers resistance to phage T7. It is thought that this enzyme is strongly suppressed during physiological growth (in E.coli total nucleotide concentration is over 8.7 mM in mid-log phase), but during viral replication, when nucleotides are rapidly consumed, it is de-suppressed and degrades target DNA. The protein is Endonuclease GajA of Bacillus cereus (strain VD045).